The sequence spans 97 residues: Bacterial microcompartment shell protein EutM (97 aa).

Residues 3 to 87 (ALGMIETRGL…PHGDLEEVFP (85 aa)) form the BMC domain.

The protein belongs to the bacterial microcompartments protein family. As to quaternary structure, homohexamer with a central pore of up to 8.6 Angstroms diameter. The hexamers pack into a two-dimensional array. Interacts with EutQ.

Its subcellular location is the bacterial microcompartment. It participates in amine and polyamine degradation; ethanolamine degradation. Probably a major component of the bacterial microcompartment (BMC) shell dedicated to ethanolamine degradation. Each homohexamer has a central pore with an opening of up to 8.6 Angstroms. A positively-charged funnel leads to the pore from each side of the hexamer. The pore probably allows metabolite passage into and out of the BMC. The protein is Bacterial microcompartment shell protein EutM (eutM) of Escherichia coli O6:H1 (strain CFT073 / ATCC 700928 / UPEC).